The sequence spans 418 residues: Deoxyribonuclease Tat-D (418 aa).

The a divalent metal cation site is built by E185, H226, H277, and D327.

The protein belongs to the metallo-dependent hydrolases superfamily. TatD-type hydrolase family. Requires Mg(2+) as cofactor.

The protein resides in the cytoplasm. Has both endo- and exonuclease activities. Incises double-stranded DNA without obvious specificity via its endonuclease activity and excises the DNA from the 3'-to 5'-end by its exonuclease activity. May have a role in apoptosis. In Saccharomyces cerevisiae (strain ATCC 204508 / S288c) (Baker's yeast), this protein is Deoxyribonuclease Tat-D.